A 200-amino-acid chain; its full sequence is Holliday junction resolvase RecU (200 aa).

Mg(2+) is bound by residues Thr85, Asp87, Glu100, and Gln119.

This sequence belongs to the RecU family. Mg(2+) is required as a cofactor.

It is found in the cytoplasm. It carries out the reaction Endonucleolytic cleavage at a junction such as a reciprocal single-stranded crossover between two homologous DNA duplexes (Holliday junction).. Its function is as follows. Endonuclease that resolves Holliday junction intermediates in genetic recombination. Cleaves mobile four-strand junctions by introducing symmetrical nicks in paired strands. Promotes annealing of linear ssDNA with homologous dsDNA. Required for DNA repair, homologous recombination and chromosome segregation. This is Holliday junction resolvase RecU from Bacillus cytotoxicus (strain DSM 22905 / CIP 110041 / 391-98 / NVH 391-98).